The sequence spans 360 residues: Photosystem II protein D1 (360 aa).

3 helical membrane passes run 29–46 (YIGW…TATS), 118–133 (HFLT…EWEL), and 142–156 (WISV…AAAA). H118 contributes to the chlorophyll a binding site. A pheophytin a-binding site is contributed by Y126. Residues D170 and E189 each coordinate [CaMn4O5] cluster. Residues 197–218 (FHQLGVAGVFGGSLFSAMHGSL) form a helical membrane-spanning segment. H198 contacts chlorophyll a. A quinone is bound by residues H215 and 264-265 (SF). Position 215 (H215) interacts with Fe cation. H272 is a Fe cation binding site. Residues 274–288 (FLGLWPVVGIWLTAL) form a helical membrane-spanning segment. Residues H332, E333, D342, and A344 each coordinate [CaMn4O5] cluster. A propeptide spanning residues 345–360 (SGESLPVALTAPAVNG) is cleaved from the precursor.

It belongs to the reaction center PufL/M/PsbA/D family. In terms of assembly, PSII is composed of 1 copy each of membrane proteins PsbA, PsbB, PsbC, PsbD, PsbE, PsbF, PsbH, PsbI, PsbJ, PsbK, PsbL, PsbM, PsbT, PsbX, PsbY, PsbZ, Psb30/Ycf12, at least 3 peripheral proteins of the oxygen-evolving complex and a large number of cofactors. It forms dimeric complexes. The cofactor is The D1/D2 heterodimer binds P680, chlorophylls that are the primary electron donor of PSII, and subsequent electron acceptors. It shares a non-heme iron and each subunit binds pheophytin, quinone, additional chlorophylls, carotenoids and lipids. D1 provides most of the ligands for the Mn4-Ca-O5 cluster of the oxygen-evolving complex (OEC). There is also a Cl(-1) ion associated with D1 and D2, which is required for oxygen evolution. The PSII complex binds additional chlorophylls, carotenoids and specific lipids.. Post-translationally, tyr-161 forms a radical intermediate that is referred to as redox-active TyrZ, YZ or Y-Z. C-terminally processed by CTPA; processing is essential to allow assembly of the oxygen-evolving complex and thus photosynthetic growth.

Its subcellular location is the plastid. It is found in the chloroplast thylakoid membrane. The catalysed reaction is 2 a plastoquinone + 4 hnu + 2 H2O = 2 a plastoquinol + O2. Its function is as follows. Photosystem II (PSII) is a light-driven water:plastoquinone oxidoreductase that uses light energy to abstract electrons from H(2)O, generating O(2) and a proton gradient subsequently used for ATP formation. It consists of a core antenna complex that captures photons, and an electron transfer chain that converts photonic excitation into a charge separation. The D1/D2 (PsbA/PsbD) reaction center heterodimer binds P680, the primary electron donor of PSII as well as several subsequent electron acceptors. This chain is Photosystem II protein D1, found in Pyropia yezoensis (Susabi-nori).